The primary structure comprises 994 residues: Tyrosine-protein kinase Mer (994 aa).

The N-terminal stretch at 1–18 (MVLAPLLLGLLLLPALWS) is a signal peptide. Topologically, residues 19-497 (GGTAEKWEET…TPAPGNTDSM (479 aa)) are extracellular. The segment at 44-78 (VNHRPFSAPHSSRDQLPPPQTGRSHPAHTAAPQVT) is disordered. Ig-like C2-type domains lie at 75-181 (PQVT…EIVS) and 192-268 (PYFI…LTVS). N-linked (GlcNAc...) asparagine glycosylation is found at Asn-91, Asn-108, Asn-165, Asn-202, Asn-210, Asn-229, Asn-289, Asn-311, Asn-324, Asn-331, Asn-349, Asn-384, Asn-390, Asn-437, and Asn-449. Cys-109 and Cys-170 are oxidised to a cystine. The cysteines at positions 213 and 257 are disulfide-linked. Fibronectin type-III domains follow at residues 281–376 (PPTE…TTEG) and 381–478 (APLN…IPEH). Residues 498–518 (FIILGCFCGFILIGLILCISL) traverse the membrane as a helical segment. Residues 519-994 (ALRRRVQETK…DSLEDSEVLM (476 aa)) lie on the Cytoplasmic side of the membrane. Ser-538 is subject to Phosphoserine. Residues 582-852 (LVLGKVLGEG…SVLRLQLEKL (271 aa)) enclose the Protein kinase domain. ATP is bound by residues 588–596 (LGEGEFGSV) and Lys-610. Asp-718 (proton acceptor) is an active-site residue. Tyr-744, Tyr-748, Tyr-749, and Tyr-867 each carry phosphotyrosine; by autocatalysis.

The protein belongs to the protein kinase superfamily. Tyr protein kinase family. AXL/UFO subfamily. In terms of assembly, interacts (upon activation) with TNK2; stimulates TNK2 autophosphorylation. Interacts (via N-terminus) with extracellular ligands LGALS3, TUB, TULP1 and GAS6. Interacts with VAV1 in a phosphotyrosine-independent manner. Interacts with TIMD4; this interaction enhances TIMD4-mediated efferocytosis. Post-translationally, autophosphorylated on Tyr-744, Tyr-748 and Tyr-749 in the activation loop allowing full activity. Autophosphorylated on Tyr-867 leading to recruitment of downstream partners of the signaling cascade such as PLCG2. As to expression, expressed predominantly in the hematopoietic lineages: macrophages, NK cells, NKT cells, dendritic cells and platelets.

It is found in the cell membrane. The catalysed reaction is L-tyrosyl-[protein] + ATP = O-phospho-L-tyrosyl-[protein] + ADP + H(+). In terms of biological role, receptor tyrosine kinase that transduces signals from the extracellular matrix into the cytoplasm by binding to several ligands including LGALS3, TUB, TULP1 or GAS6. Regulates many physiological processes including cell survival, migration, differentiation, and phagocytosis of apoptotic cells (efferocytosis). Ligand binding at the cell surface induces autophosphorylation of MERTK on its intracellular domain that provides docking sites for downstream signaling molecules. Following activation by ligand, interacts with GRB2 or PLCG2 and induces phosphorylation of MAPK1, MAPK2, FAK/PTK2 or RAC1. MERTK signaling plays a role in various processes such as macrophage clearance of apoptotic cells, platelet aggregation, cytoskeleton reorganization and engulfment. Functions in the retinal pigment epithelium (RPE) as a regulator of rod outer segments fragments phagocytosis. Also plays an important role in inhibition of Toll-like receptors (TLRs)-mediated innate immune response by activating STAT1, which selectively induces production of suppressors of cytokine signaling SOCS1 and SOCS3. This chain is Tyrosine-protein kinase Mer (Mertk), found in Mus musculus (Mouse).